The following is a 355-amino-acid chain: 3'-5' exonuclease (355 aa).

The tract at residues 1 to 121 is disordered; that stretch reads MDKYLIKLPN…PSPEKEKPEK (121 aa). Composition is skewed to basic and acidic residues over residues 17–29, 36–50, and 72–92; these read VSDK…KETP, AKKD…KENT, and KNLD…ENPP. Serine 105 and serine 113 each carry phosphoserine. The 3'-5' exonuclease domain maps to 147 to 315; sequence VMQWVEKQKE…GQVIYRDLEQ (169 aa). Mg(2+) contacts are provided by aspartate 164, glutamate 166, and aspartate 302.

Belongs to the WRNexo family.

It is found in the nucleus. Has exonuclease activity on both single-stranded and duplex templates bearing overhangs, but not blunt ended duplex DNA, and cleaves in a 3'-5' direction. Essential for the formation of DNA replication focal centers. Has an important role in maintaining genome stability. The sequence is that of 3'-5' exonuclease from Drosophila ananassae (Fruit fly).